We begin with the raw amino-acid sequence, 353 residues long: Biotin synthase (353 aa).

The Radical SAM core domain maps to 51 to 270; it reads NEVQCNQLLN…IALARIMMPK (220 aa). 3 residues coordinate [4Fe-4S] cluster: Cys66, Cys70, and Cys73. Positions 110, 141, 201, and 274 each coordinate [2Fe-2S] cluster. A disordered region spans residues 330 to 353; the sequence is APVEAHSHDHDHDHHDHHHGHSHS. Positions 334–343 are enriched in basic and acidic residues; it reads AHSHDHDHDH. Over residues 344-353 the composition is skewed to basic residues; it reads HDHHHGHSHS.

Belongs to the radical SAM superfamily. Biotin synthase family. As to quaternary structure, homodimer. [4Fe-4S] cluster is required as a cofactor. It depends on [2Fe-2S] cluster as a cofactor.

The catalysed reaction is (4R,5S)-dethiobiotin + (sulfur carrier)-SH + 2 reduced [2Fe-2S]-[ferredoxin] + 2 S-adenosyl-L-methionine = (sulfur carrier)-H + biotin + 2 5'-deoxyadenosine + 2 L-methionine + 2 oxidized [2Fe-2S]-[ferredoxin]. It participates in cofactor biosynthesis; biotin biosynthesis; biotin from 7,8-diaminononanoate: step 2/2. Catalyzes the conversion of dethiobiotin (DTB) to biotin by the insertion of a sulfur atom into dethiobiotin via a radical-based mechanism. The chain is Biotin synthase from Rhodopseudomonas palustris (strain HaA2).